The chain runs to 172 residues: Stellate protein CG33239/CG33241 (172 aa).

The protein belongs to the casein kinase 2 subunit beta family. As to quaternary structure, interacts in vitro with the casein kinase 2 alpha subunit (CkII-alpha). The relevance of such interaction is however unclear in vivo. As to expression, probably not expressed in wild-type flies. In males lacking the Y chromosome, it is testis-specific and constitutes the main component of star-shaped crystals.

In terms of biological role, unknown. In males lacking the Y chromosome, its strong overexpression leads to the appearance of proteinaceous star-shaped crystals in the primary spermatocytes causing meiotic drive, possibly by interfering with normal casein kinase 2 activity. The polypeptide is Stellate protein CG33239/CG33241 (Ste:CG33239) (Drosophila melanogaster (Fruit fly)).